The primary structure comprises 462 residues: Calcitonin gene-related peptide type 1 receptor (462 aa).

The N-terminal stretch at 1 to 22 is a signal peptide; it reads MEKKYILYFLFLLPFFMILVIA. At 23-140 the chain is on the extracellular side; that stretch reads ETEEENPDDL…NTHEKVQTAL (118 aa). Intrachain disulfides connect cysteine 49-cysteine 75, cysteine 66-cysteine 106, and cysteine 89-cysteine 128. 3 N-linked (GlcNAc...) asparagine glycosylation sites follow: asparagine 67, asparagine 119, and asparagine 124. Residues 141-165 form a helical membrane-spanning segment; it reads NLFYLTIIGHGLSIASLLISLGIFF. The Cytoplasmic segment spans residues 166-176; the sequence is YFKSLSCQRIT. Residues 177–199 traverse the membrane as a helical segment; the sequence is LHKNLFFSFVCNSIVTIIHLTAV. At 200-210 the chain is on the extracellular side; sequence ANNQALVATNP. Residues 211-239 form a helical membrane-spanning segment; sequence VSCKVFQFIHLYLMGCNYFWMLCEGIYLH. Residues 240 to 253 are Cytoplasmic-facing; sequence TLIVVAVFAEKQHL. A helical membrane pass occupies residues 254–274; that stretch reads MWYYFLGWGFPLIPACIHAVA. At 275 to 290 the chain is on the extracellular side; the sequence is RRLYYNDNCWISSDTH. The interval 289-290 is required for RAMP3 interaction; sequence TH. Residues 291–315 traverse the membrane as a helical segment; sequence LLYIIHGPICAALLVNLFFLLNIVR. Residues 316–330 lie on the Cytoplasmic side of the membrane; that stretch reads VLITKLKVTHQAESN. A helical transmembrane segment spans residues 331–352; the sequence is LYMKAVRATLILVPLLGIEFVL. Residues 353 to 367 lie on the Extracellular side of the membrane; it reads IPWRPEGKIAEEVYD. Residues 368-388 traverse the membrane as a helical segment; sequence YIMHILVHYQGLLVSTIYCFF. Residues 389–462 lie on the Cytoplasmic side of the membrane; that stretch reads NGEVQAILRR…IVIKPEKLYD (74 aa). Phosphoserine occurs at positions 421 and 446.

This sequence belongs to the G-protein coupled receptor 2 family. In terms of assembly, heterodimer of CALCRL and RAMP1; the receptor complex functions as CGRP receptor. Heterodimer of CALCRL and RAMP2 or CALCRL and RAMP3; the complexes function as adrenomedullin receptor. Detected in lung and coronary artery.

The protein localises to the cell membrane. In terms of biological role, g protein-coupled receptor which specificity is determined by its interaction with receptor-activity-modifying proteins (RAMPs). Together with RAMP1, form the receptor complex for calcitonin-gene-related peptides CALCA/CGRP1 and CALCB/CGRP2. Together with RAMP2 or RAMP3, function as receptor complexes for adrenomedullin (ADM and ADM2). Ligand binding causes a conformation change that triggers signaling via guanine nucleotide-binding proteins (G proteins) and modulates the activity of downstream effectors. Activates cAMP-dependent pathway. In Sus scrofa (Pig), this protein is Calcitonin gene-related peptide type 1 receptor (CALCRL).